The following is a 20-amino-acid chain: Methyl-coenzyme M reductase subunit gamma (20 aa).

The tract at residues 1 to 20 (AYERQFYPGATSVAENNIGH) is disordered.

This sequence belongs to the methyl-coenzyme M reductase gamma subunit family. MCR from M.thermophila is a heterotrimer composed of an alpha, a beta, and a gamma subunit. It depends on coenzyme F430 as a cofactor.

It is found in the cytoplasm. The enzyme catalyses coenzyme B + methyl-coenzyme M = methane + coenzyme M-coenzyme B heterodisulfide. It participates in one-carbon metabolism; methyl-coenzyme M reduction; methane from methyl-coenzyme M: step 1/1. Component of the methyl-coenzyme M reductase (MCR) I that catalyzes the reductive cleavage of methyl-coenzyme M (CoM-S-CH3 or 2-(methylthio)ethanesulfonate) using coenzyme B (CoB or 7-mercaptoheptanoylthreonine phosphate) as reductant which results in the production of methane and the mixed heterodisulfide of CoB and CoM (CoM-S-S-CoB). This is the final step in methanogenesis. This chain is Methyl-coenzyme M reductase subunit gamma, found in Methanosarcina thermophila.